Reading from the N-terminus, the 527-residue chain is Catalase (527 aa).

The span at 1 to 22 shows a compositional bias: basic and acidic residues; sequence MADNRDPASDQMKHWKEQRAAQ. Residues 1 to 42 form a disordered region; that stretch reads MADNRDPASDQMKHWKEQRAAQKPDVLTTGGGNPVGDKLNSL. Ala-2 is subject to Blocked amino end (Ala); alternate. Ala-2 carries the post-translational modification N-acetylalanine; alternate. Ser-9 bears the Phosphoserine mark. Lys-13 bears the N6-succinyllysine mark. Active-site residues include His-75 and Asn-148. 6 residues coordinate NADP(+): His-194, Phe-198, Ser-201, Arg-203, Asn-213, and Tyr-215. Lys-221 bears the N6-succinyllysine mark. Residue Lys-233 is modified to N6-acetyllysine. 3 residues coordinate NADP(+): Lys-237, Trp-303, and His-305. Residue Tyr-358 participates in heme binding. Ser-417 and Ser-434 each carry phosphoserine. NADP(+) is bound by residues Gln-442, Thr-445, and Phe-446. N6-acetyllysine; alternate occurs at positions 449 and 480. N6-succinyllysine; alternate occurs at positions 449 and 480. An N6-acetyllysine modification is found at Lys-499. Phosphothreonine is present on Thr-511. Ser-517 is modified (phosphoserine). The Microbody targeting signal; atypical signature appears at 524-527; that stretch reads KANL.

Belongs to the catalase family. As to quaternary structure, homotetramer. Interacts (via microbody targeting signal) with PEX5, monomeric form interacts with PEX5, leading to its translocation into peroxisomes. Requires heme as cofactor. NADP(+) is required as a cofactor.

Its subcellular location is the peroxisome matrix. It carries out the reaction 2 H2O2 = O2 + 2 H2O. Its function is as follows. Catalyzes the degradation of hydrogen peroxide (H(2)O(2)) generated by peroxisomal oxidases to water and oxygen, thereby protecting cells from the toxic effects of hydrogen peroxide. Promotes growth of cells including T-cells, B-cells, myeloid leukemia cells, melanoma cells, mastocytoma cells and normal and transformed fibroblast cells. The sequence is that of Catalase (CAT) from Bos taurus (Bovine).